A 252-amino-acid polypeptide reads, in one-letter code: 3-dehydroquinate dehydratase (252 aa).

3-dehydroquinate-binding positions include serine 21, 46–48 (EWR), and arginine 82. The active-site Proton donor/acceptor is histidine 143. The active-site Schiff-base intermediate with substrate is the lysine 170. Residues arginine 213, serine 232, and glutamine 236 each coordinate 3-dehydroquinate.

The protein belongs to the type-I 3-dehydroquinase family. As to quaternary structure, homodimer.

The enzyme catalyses 3-dehydroquinate = 3-dehydroshikimate + H2O. It functions in the pathway metabolic intermediate biosynthesis; chorismate biosynthesis; chorismate from D-erythrose 4-phosphate and phosphoenolpyruvate: step 3/7. Its function is as follows. Involved in the third step of the chorismate pathway, which leads to the biosynthesis of aromatic amino acids. Catalyzes the cis-dehydration of 3-dehydroquinate (DHQ) and introduces the first double bond of the aromatic ring to yield 3-dehydroshikimate. This is 3-dehydroquinate dehydratase from Salmonella dublin (strain CT_02021853).